Reading from the N-terminus, the 479-residue chain is Ribosomal RNA small subunit methyltransferase F (479 aa).

Residues 125-131 (AAAPGSK), glutamate 149, aspartate 176, and aspartate 194 each bind S-adenosyl-L-methionine. Cysteine 247 functions as the Nucleophile in the catalytic mechanism.

The protein belongs to the class I-like SAM-binding methyltransferase superfamily. RsmB/NOP family.

It localises to the cytoplasm. The catalysed reaction is cytidine(1407) in 16S rRNA + S-adenosyl-L-methionine = 5-methylcytidine(1407) in 16S rRNA + S-adenosyl-L-homocysteine + H(+). Its function is as follows. Specifically methylates the cytosine at position 1407 (m5C1407) of 16S rRNA. This chain is Ribosomal RNA small subunit methyltransferase F, found in Salmonella schwarzengrund (strain CVM19633).